The sequence spans 266 residues: Glutamate racemase (266 aa).

Substrate contacts are provided by residues 9-10 (DS) and 41-42 (YG). The Proton donor/acceptor role is filled by Cys-72. 73-74 (NT) serves as a coordination point for substrate. Cys-184 (proton donor/acceptor) is an active-site residue. 185-186 (TH) provides a ligand contact to substrate.

It belongs to the aspartate/glutamate racemases family.

The catalysed reaction is L-glutamate = D-glutamate. It participates in cell wall biogenesis; peptidoglycan biosynthesis. Provides the (R)-glutamate required for cell wall biosynthesis. The protein is Glutamate racemase of Staphylococcus haemolyticus (strain JCSC1435).